The following is a 294-amino-acid chain: tRNA dimethylallyltransferase (294 aa).

10-17 is a binding site for ATP; it reads GPTAVGKT. Position 12 to 17 (12 to 17) interacts with substrate; the sequence is TAVGKT. Residues 35-38 are interaction with substrate tRNA; the sequence is DSQQ.

Belongs to the IPP transferase family. As to quaternary structure, monomer. Requires Mg(2+) as cofactor.

The catalysed reaction is adenosine(37) in tRNA + dimethylallyl diphosphate = N(6)-dimethylallyladenosine(37) in tRNA + diphosphate. Its function is as follows. Catalyzes the transfer of a dimethylallyl group onto the adenine at position 37 in tRNAs that read codons beginning with uridine, leading to the formation of N6-(dimethylallyl)adenosine (i(6)A). This chain is tRNA dimethylallyltransferase, found in Streptococcus pneumoniae (strain P1031).